The primary structure comprises 367 residues: Leu/Ile/Val-binding protein (367 aa).

The N-terminal stretch at 1–23 (MNIKGKALLAGCIALAFSNMALA) is a signal peptide. Residues Cys76 and Cys101 are joined by a disulfide bond.

This sequence belongs to the leucine-binding protein family.

Its subcellular location is the periplasm. Its function is as follows. This protein is a component of the leucine, isoleucine, valine, (threonine) transport system, which is one of the two periplasmic binding protein-dependent transport systems of the high-affinity transport of the branched-chain amino acids. The protein is Leu/Ile/Val-binding protein (livJ) of Escherichia coli O157:H7.